We begin with the raw amino-acid sequence, 331 residues long: Major ferric iron-binding protein (331 aa).

A signal peptide spans Met1 to Ala22. Fe cation-binding residues include His31, Glu79, Tyr217, and Tyr218.

This sequence belongs to the bacterial solute-binding protein 1 family.

The protein localises to the periplasm. This protein may be a central component in the iron-acquisition system. The protein is Major ferric iron-binding protein (fbpA) of Neisseria meningitidis serogroup A / serotype 4A (strain DSM 15465 / Z2491).